Consider the following 519-residue polypeptide: cAMP-dependent protein kinase catalytic subunit (519 aa).

Positions 1–195 (MLPDTGILSP…SQTLQKAENA (195 aa)) are disordered. 3 stretches are compositionally biased toward polar residues: residues 10–25 (PFTTAVNPDPPQSQTL), 116–159 (VTPS…TSPI), and 173–191 (TPVNESAGHSRSDSQTLQK). Residues 208 to 463 (FNFQRTLGTG…SRSVLEHPWF (256 aa)) enclose the Protein kinase domain. Residues 214 to 222 (LGTGSFGRV) and Lys237 contribute to the ATP site. Asp331 acts as the Proton acceptor in catalysis. One can recognise an AGC-kinase C-terminal domain in the interval 464–519 (AEVNWERLLSKQIEPPYVPPVRGGIGDASLFDKYPEETEEYGKDGPDQYGHFFTDF).

It belongs to the protein kinase superfamily. Ser/Thr protein kinase family.

It catalyses the reaction L-seryl-[protein] + ATP = O-phospho-L-seryl-[protein] + ADP + H(+). The catalysed reaction is L-threonyl-[protein] + ATP = O-phospho-L-threonyl-[protein] + ADP + H(+). With respect to regulation, activated by cAMP. Its function is as follows. Functions downstream of adenylate cyclase to regulate trap-development for nematode capture. This is cAMP-dependent protein kinase catalytic subunit from Arthrobotrys oligospora (strain ATCC 24927 / CBS 115.81 / DSM 1491) (Nematode-trapping fungus).